Reading from the N-terminus, the 126-residue chain is MAILGLGTDIVEIARIESVIARSGERLARRVLSDNEWAIWKTHHQPVRFLAKRFAVKEAAAKAFGTGIRNGLAFNQFEVFNDELGKPRLRLWGEALKLAEKLGVVNMHVTLADERHYACATVIIES.

The Mg(2+) site is built by Asp9 and Glu58.

Belongs to the P-Pant transferase superfamily. AcpS family. Mg(2+) is required as a cofactor.

Its subcellular location is the cytoplasm. The catalysed reaction is apo-[ACP] + CoA = holo-[ACP] + adenosine 3',5'-bisphosphate + H(+). Transfers the 4'-phosphopantetheine moiety from coenzyme A to a Ser of acyl-carrier-protein. In Escherichia coli O17:K52:H18 (strain UMN026 / ExPEC), this protein is Holo-[acyl-carrier-protein] synthase.